The chain runs to 609 residues: Granule-bound starch synthase 1, chloroplastic/amyloplastic (609 aa).

The transit peptide at 1–77 directs the protein to the chloroplast; it reads MSALTTSQLA…SRRFPSVVVY (77 aa). Residues 29–67 are disordered; that stretch reads RHGFQGLKPRSPAGGDATSLSVTTSARATPKQQRSVQRG. The span at 46–66 shows a compositional bias: polar residues; it reads TSLSVTTSARATPKQQRSVQR. K97 provides a ligand contact to ADP-alpha-D-glucose.

Belongs to the glycosyltransferase 1 family. Bacterial/plant glycogen synthase subfamily.

It is found in the plastid. Its subcellular location is the chloroplast. It localises to the amyloplast. The enzyme catalyses an NDP-alpha-D-glucose + [(1-&gt;4)-alpha-D-glucosyl](n) = [(1-&gt;4)-alpha-D-glucosyl](n+1) + a ribonucleoside 5'-diphosphate + H(+). The protein operates within glycan biosynthesis; starch biosynthesis. In terms of biological role, required for the synthesis of amylose in endosperm. This is Granule-bound starch synthase 1, chloroplastic/amyloplastic (WAXY) from Oryza glaberrima (African rice).